The primary structure comprises 164 residues: Cyclic pyranopterin monophosphate synthase (164 aa).

Residues 75–77 (MAH) and 112–113 (ME) contribute to the substrate site. Asp-127 is an active-site residue.

It belongs to the MoaC family. As to quaternary structure, homohexamer; trimer of dimers.

It catalyses the reaction (8S)-3',8-cyclo-7,8-dihydroguanosine 5'-triphosphate = cyclic pyranopterin phosphate + diphosphate. It participates in cofactor biosynthesis; molybdopterin biosynthesis. In terms of biological role, catalyzes the conversion of (8S)-3',8-cyclo-7,8-dihydroguanosine 5'-triphosphate to cyclic pyranopterin monophosphate (cPMP). This is Cyclic pyranopterin monophosphate synthase from Desulforamulus reducens (strain ATCC BAA-1160 / DSM 100696 / MI-1) (Desulfotomaculum reducens).